Consider the following 314-residue polypeptide: Glutamyl-Q tRNA(Asp) synthetase (314 aa).

L-glutamate is bound by residues 14–18 (RFAPS) and glutamate 50. The short motif at 17–27 (PSPTGPLHVGS) is the 'HIGH' region element. Zn(2+) contacts are provided by cysteine 106, cysteine 108, tyrosine 129, and cysteine 133. L-glutamate-binding residues include tyrosine 187 and arginine 205. Residues 243-247 (KLSKR) carry the 'KMSKS' region motif. Lysine 246 is a binding site for ATP.

Belongs to the class-I aminoacyl-tRNA synthetase family. GluQ subfamily. Zn(2+) serves as cofactor.

In terms of biological role, catalyzes the tRNA-independent activation of glutamate in presence of ATP and the subsequent transfer of glutamate onto a tRNA(Asp). Glutamate is transferred on the 2-amino-5-(4,5-dihydroxy-2-cyclopenten-1-yl) moiety of the queuosine in the wobble position of the QUC anticodon. In Geobacter sulfurreducens (strain ATCC 51573 / DSM 12127 / PCA), this protein is Glutamyl-Q tRNA(Asp) synthetase.